The following is a 316-amino-acid chain: NAC domain-containing protein 22 (316 aa).

An NAC domain is found at 17 to 170 (DLPGFRFHPT…DMVLCKIYRK (154 aa)). A DNA-binding region spans residues 117-176 (IGLKKTLVFYQGRAPRGTKTDWVMNEYRLPDYGAARAAAPPPKEDMVLCKIYRKATPLKE). The interval 229–260 (QSSSSSAAPSGSSSKNGGAGAPREAKKEEADV) is disordered. A compositionally biased stretch (low complexity) spans 230-244 (SSSSSAAPSGSSSKN).

It is found in the nucleus. Functionally, transcription activator that binds sequence-specific DNA motifs. Involved in stress response. Plays a positive role in drought and salt stress tolerance through the modulation of abscisic acid-mediated signaling. This is NAC domain-containing protein 22 from Oryza sativa subsp. japonica (Rice).